We begin with the raw amino-acid sequence, 361 residues long: Transmembrane protein 116 (361 aa).

The next 7 membrane-spanning stretches (helical) occupy residues 29–49, 64–84, 103–123, 147–167, 210–230, 261–281, and 295–315; these read WIQM…ILYA, FLLS…GLLF, TLYM…YTGL, LGPV…FVAG, CMAI…IFMG, MVLY…LATM, and VALY…NCLV.

The protein resides in the membrane. The chain is Transmembrane protein 116 (tmem116) from Danio rerio (Zebrafish).